A 480-amino-acid chain; its full sequence is Aspartyl/glutamyl-tRNA(Asn/Gln) amidotransferase subunit B (480 aa).

Belongs to the GatB/GatE family. GatB subfamily. Heterotrimer of A, B and C subunits.

The catalysed reaction is L-glutamyl-tRNA(Gln) + L-glutamine + ATP + H2O = L-glutaminyl-tRNA(Gln) + L-glutamate + ADP + phosphate + H(+). It carries out the reaction L-aspartyl-tRNA(Asn) + L-glutamine + ATP + H2O = L-asparaginyl-tRNA(Asn) + L-glutamate + ADP + phosphate + 2 H(+). Its function is as follows. Allows the formation of correctly charged Asn-tRNA(Asn) or Gln-tRNA(Gln) through the transamidation of misacylated Asp-tRNA(Asn) or Glu-tRNA(Gln) in organisms which lack either or both of asparaginyl-tRNA or glutaminyl-tRNA synthetases. The reaction takes place in the presence of glutamine and ATP through an activated phospho-Asp-tRNA(Asn) or phospho-Glu-tRNA(Gln). The polypeptide is Aspartyl/glutamyl-tRNA(Asn/Gln) amidotransferase subunit B (Streptococcus thermophilus (strain ATCC BAA-491 / LMD-9)).